The sequence spans 266 residues: 3-methyl-2-oxobutanoate hydroxymethyltransferase (266 aa).

2 residues coordinate Mg(2+): D45 and D84. Residues 45–46 (DS), D84, and K112 contribute to the 3-methyl-2-oxobutanoate site. E114 is a binding site for Mg(2+). The active-site Proton acceptor is E181.

Belongs to the PanB family. Homodecamer; pentamer of dimers. Requires Mg(2+) as cofactor.

It is found in the cytoplasm. The enzyme catalyses 3-methyl-2-oxobutanoate + (6R)-5,10-methylene-5,6,7,8-tetrahydrofolate + H2O = 2-dehydropantoate + (6S)-5,6,7,8-tetrahydrofolate. It participates in cofactor biosynthesis; (R)-pantothenate biosynthesis; (R)-pantoate from 3-methyl-2-oxobutanoate: step 1/2. Catalyzes the reversible reaction in which hydroxymethyl group from 5,10-methylenetetrahydrofolate is transferred onto alpha-ketoisovalerate to form ketopantoate. The polypeptide is 3-methyl-2-oxobutanoate hydroxymethyltransferase (Pseudomonas putida (strain ATCC 700007 / DSM 6899 / JCM 31910 / BCRC 17059 / LMG 24140 / F1)).